The primary structure comprises 423 residues: Putative gustatory receptor 97a (423 aa).

Topologically, residues 1-31 (MRFLRRQTRRLRSIWQRSLPVRFRRGKLHTQ) are cytoplasmic. The chain crosses the membrane as a helical span at residues 32 to 52 (LVTICLYATVFLNILYGVYLG). Over 53 to 65 (RFSFRRKKFVFSK) the chain is Extracellular. Residues 66-86 (GLTIYSLFVATFFALFYIWNI) traverse the membrane as a helical segment. Residues 87-99 (YNEISTGQINLRD) lie on the Cytoplasmic side of the membrane. Residues 100–120 (TIGIYCYMNVCVCLFNYVTQW) form a helical membrane-spanning segment. At 121–152 (EKTLQIIRFQNSVPLFKVLDSLDISAMIVWRA) the chain is on the extracellular side. The chain crosses the membrane as a helical span at residues 153–173 (FIYGLLKIVFCPLITYITLIL). Over 174–200 (YHRRSISESQWTSVTTTKTMLPLIVSN) the chain is Cytoplasmic. Residues 201–221 (QINNCFFGGLVLANLIFAAVN) traverse the membrane as a helical segment. At 222–278 (RKLHGIVKEANMLQSPVQMNLHKPYYRMRRFCELADLLDELARKYGFTASRSKNYLR) the chain is on the extracellular side. The helical transmembrane segment at 279-299 (FTDWSMVLSMLMNLLGITMGC) threads the bilayer. Topologically, residues 300–317 (YNQYLAIADHYINEEPFD) are cytoplasmic. Residues 318 to 338 (LFLAIVLVVFLAVPFLELVMV) form a helical membrane-spanning segment. The Extracellular segment spans residues 339–423 (ARISNQTLTR…SDLTLRFSLK (85 aa)). N-linked (GlcNAc...) asparagine glycans are attached at residues N343 and N393.

It belongs to the insect chemoreceptor superfamily. Gustatory receptor (GR) family. Gr22e subfamily. In larvae, is expressed in neurons of the terminal external chemosensory organ.

It is found in the cell membrane. Its function is as follows. Probable gustatory receptor which mediates acceptance or avoidance behavior, depending on its substrates. This is Putative gustatory receptor 97a (Gr97a) from Drosophila melanogaster (Fruit fly).